The primary structure comprises 1412 residues: DNA-directed RNA polymerase subunit beta' (1412 aa).

Residues Cys71, Cys73, Cys86, and Cys89 each coordinate Zn(2+). Asp461, Asp463, and Asp465 together coordinate Mg(2+). 4 residues coordinate Zn(2+): Cys815, Cys889, Cys896, and Cys899.

It belongs to the RNA polymerase beta' chain family. As to quaternary structure, the RNAP catalytic core consists of 2 alpha, 1 beta, 1 beta' and 1 omega subunit. When a sigma factor is associated with the core the holoenzyme is formed, which can initiate transcription. Requires Mg(2+) as cofactor. Zn(2+) serves as cofactor.

The enzyme catalyses RNA(n) + a ribonucleoside 5'-triphosphate = RNA(n+1) + diphosphate. In terms of biological role, DNA-dependent RNA polymerase catalyzes the transcription of DNA into RNA using the four ribonucleoside triphosphates as substrates. The protein is DNA-directed RNA polymerase subunit beta' of Actinobacillus pleuropneumoniae serotype 5b (strain L20).